Reading from the N-terminus, the 514-residue chain is ATP synthase subunit alpha (514 aa).

Position 170–177 (170–177 (GDRQTGKT)) interacts with ATP.

The protein belongs to the ATPase alpha/beta chains family. In terms of assembly, F-type ATPases have 2 components, CF(1) - the catalytic core - and CF(0) - the membrane proton channel. CF(1) has five subunits: alpha(3), beta(3), gamma(1), delta(1), epsilon(1). CF(0) has three main subunits: a(1), b(2) and c(9-12). The alpha and beta chains form an alternating ring which encloses part of the gamma chain. CF(1) is attached to CF(0) by a central stalk formed by the gamma and epsilon chains, while a peripheral stalk is formed by the delta and b chains.

It localises to the cell inner membrane. It catalyses the reaction ATP + H2O + 4 H(+)(in) = ADP + phosphate + 5 H(+)(out). Produces ATP from ADP in the presence of a proton gradient across the membrane. The alpha chain is a regulatory subunit. The sequence is that of ATP synthase subunit alpha from Acidithiobacillus ferrooxidans (strain ATCC 23270 / DSM 14882 / CIP 104768 / NCIMB 8455) (Ferrobacillus ferrooxidans (strain ATCC 23270)).